The following is a 360-amino-acid chain: Protein phosphatase 1L (360 aa).

Over methionine 1–threonine 25 the chain is Extracellular. A helical membrane pass occupies residues leucine 26–threonine 42. Over aspartate 43–glutamine 360 the chain is Cytoplasmic. In terms of domain architecture, PPM-type phosphatase spans asparagine 92–phenylalanine 351. Mn(2+) contacts are provided by aspartate 128, glycine 129, aspartate 302, and aspartate 342.

This sequence belongs to the PP2C family. Interacts with MAP3K7/TAK1 and MAP3K5. Mg(2+) is required as a cofactor. Requires Mn(2+) as cofactor.

The protein localises to the membrane. The catalysed reaction is O-phospho-L-seryl-[protein] + H2O = L-seryl-[protein] + phosphate. It carries out the reaction O-phospho-L-threonyl-[protein] + H2O = L-threonyl-[protein] + phosphate. In terms of biological role, acts as a suppressor of the SAPK signaling pathways by associating with and dephosphorylating MAP3K7/TAK1 and MAP3K5, and by attenuating the association between MAP3K7/TAK1 and MAP2K4 or MAP2K6. The chain is Protein phosphatase 1L (PPM1L) from Bos taurus (Bovine).